Here is a 160-residue protein sequence, read N- to C-terminus: Lymphocyte antigen 96 (160 aa).

An N-terminal signal peptide occupies residues 1-16 (MFPFMLFSTLFSSIFT). 3 cysteine pairs are disulfide-bonded: cysteine 25–cysteine 51, cysteine 37–cysteine 148, and cysteine 95–cysteine 105. An N-linked (GlcNAc...) asparagine glycan is attached at asparagine 26. Residue asparagine 114 is glycosylated (N-linked (GlcNAc...) asparagine). An interaction with lipopolysaccharide region spans residues 119–123 (FSFQG). N-linked (GlcNAc...) asparagine glycosylation occurs at asparagine 150.

Heterogeneous homomer formed from homodimers; disulfide-linked. Belongs to the lipopolysaccharide (LPS) receptor, a multi-protein complex containing at least CD14, LY96 and TLR4. Binds to the extracellular domains of TLR2 and TLR4. Ligand binding induces interaction with TLR4 and oligomerization of the complex. N-glycosylated.

It is found in the secreted. The protein localises to the extracellular space. Binds bacterial lipopolysaccharide (LPS). Cooperates with TLR4 in the innate immune response to bacterial lipopolysaccharide (LPS), and with TLR2 in the response to cell wall components from Gram-positive and Gram-negative bacteria. Enhances TLR4-dependent activation of NF-kappa-B. Cells expressing both LY96 and TLR4, but not TLR4 alone, respond to LPS. The chain is Lymphocyte antigen 96 (LY96) from Bos taurus (Bovine).